The chain runs to 284 residues: Tropomyosin alpha-1 chain (284 aa).

The disordered stretch occupies residues 1 to 38 (MDAIKKKMQMLKLDKENALDRAEQAEADKKGAEDKSKQ). Residues 1 to 284 (MDAIKKKMQM…DHALNDMTSI (284 aa)) are a coiled coil. Positions 12–38 (KLDKENALDRAEQAEADKKGAEDKSKQ) are enriched in basic and acidic residues.

This sequence belongs to the tropomyosin family. In terms of assembly, homodimer. Heterodimer of an alpha (TPM1, TPM3 or TPM4) and a beta (TPM2) chain.

Its subcellular location is the cytoplasm. It is found in the cytoskeleton. In terms of biological role, binds to actin filaments in muscle and non-muscle cells. Plays a central role, in association with the troponin complex, in the calcium dependent regulation of vertebrate striated muscle contraction. Smooth muscle contraction is regulated by interaction with caldesmon. In non-muscle cells is implicated in stabilizing cytoskeleton actin filaments. In Xenopus laevis (African clawed frog), this protein is Tropomyosin alpha-1 chain (tpm1).